Reading from the N-terminus, the 470-residue chain is E3 SUMO-protein ligase EGR2 (470 aa).

Residues 126-141 (PPASTTASSSVTSASP) show a composition bias toward low complexity. Disordered regions lie at residues 126–153 (PPAS…GVCT), 159–178 (PELD…SGCT), and 184–211 (DPSA…YPSP). Lysine 247 is modified (N6-acetyllysine; by EP300). Positions 275–344 (GPSAGVTGPG…RPYPCPAEGC (70 aa)) are disordered. Over residues 281-291 (TGPGASGGGEG) the composition is skewed to gly residues. 3 C2H2-type zinc fingers span residues 337 to 361 (YPCP…IRIH), 367 to 389 (FQCR…IRTH), and 395 to 417 (FACD…TKIH). The interval 408–470 (DERKRHTKIH…ASCTSRTRTP (63 aa)) is disordered. Residues 412–422 (RHTKIHLRQKE) show a composition bias toward basic residues. Positions 426 to 439 (SAPSSSASAQSSAS) are enriched in low complexity. A compositionally biased stretch (gly residues) spans 440–450 (GPGGSQAGGSL).

The protein belongs to the EGR C2H2-type zinc-finger protein family. As to quaternary structure, interacts with HCFC1. Interacts with WWP2. Interacts with UBC9. Interacts with CITED1. Interacts (via phosphorylated form) with SFN. Post-translationally, ubiquitinated by WWP2 leading to proteasomal degradation. Acetylated at Lys-247. May be deacetylated by HDAC6, HDAC10 or SIRT1.

The protein localises to the nucleus. It participates in protein modification; protein sumoylation. Functionally, sequence-specific DNA-binding transcription factor. Plays a role in hindbrain segmentation by regulating the expression of a subset of homeobox containing genes and in Schwann cell myelination by regulating the expression of genes involved in the formation and maintenance of myelin. Binds to two EGR2-consensus sites EGR2A (5'-CTGTAGGAG-3') and EGR2B (5'-ATGTAGGTG-3') in the HOXB3 enhancer and promotes HOXB3 transcriptional activation. Binds to specific DNA sites located in the promoter region of HOXA4, HOXB2 and ERBB2. Regulates hindbrain segmentation by controlling the expression of Hox genes, such as HOXA4, HOXB3 and HOXB2, and thereby specifying odd and even rhombomeres. Promotes the expression of HOXB3 in the rhombomere r5 in the hindbrain. Regulates myelination in the peripheral nervous system after birth, possibly by regulating the expression of myelin proteins, such as MPZ, and by promoting the differentiation of Schwann cells. Involved in the development of the jaw openener musculature, probably by playing a role in its innervation through trigeminal motor neurons. May play a role in adipogenesis, possibly by regulating the expression of CEBPB. In terms of biological role, E3 SUMO-protein ligase helping SUMO1 conjugation to its coregulators NAB1 and NAB2, whose sumoylation down-regulates EGR2 transcriptional activity. This Rattus norvegicus (Rat) protein is E3 SUMO-protein ligase EGR2 (Egr2).